A 227-amino-acid chain; its full sequence is Ribonuclease 3 (227 aa).

One can recognise an RNase III domain in the interval 6 to 128 (ASDYQQRIGY…VIAAIYLDAD (123 aa)). E41 provides a ligand contact to Mg(2+). The active site involves D45. Mg(2+) contacts are provided by D114 and E117. The active site involves E117. Positions 155–225 (DPKTRLQEWL…ASHAIDQLDS (71 aa)) constitute a DRBM domain. Residues 203-212 (GEGSSRRLAE) are compositionally biased toward basic and acidic residues. The interval 203–227 (GEGSSRRLAEQDAASHAIDQLDSNK) is disordered.

Belongs to the ribonuclease III family. As to quaternary structure, homodimer. It depends on Mg(2+) as a cofactor.

The protein localises to the cytoplasm. It catalyses the reaction Endonucleolytic cleavage to 5'-phosphomonoester.. In terms of biological role, digests double-stranded RNA. Involved in the processing of primary rRNA transcript to yield the immediate precursors to the large and small rRNAs (23S and 16S). Processes some mRNAs, and tRNAs when they are encoded in the rRNA operon. Processes pre-crRNA and tracrRNA of type II CRISPR loci if present in the organism. The chain is Ribonuclease 3 from Xylella fastidiosa (strain 9a5c).